A 288-amino-acid chain; its full sequence is Ankyrin repeat and SOCS box protein 8 (288 aa).

Serine 17 is modified (phosphoserine). ANK repeat units follow at residues 52–81, 85–113, 117–146, and 150–179; these read GTLKPLHCACMVSDADCVELLLEKGAEVNA, YNRTVLHYAAEKDEACVEVLLEYGANPNA, NRDTPLHWAAFKNNAECVRALLESGASVNA, and NNDTPLSWAAMKGNLESVSILLDYGAEVRV. Residues 235–288 form the SOCS box domain; the sequence is QLCEKLTVLCSAPGTLKTLARYAVRRSLGLQYLPDAVKGLPLPASLKEYLLLLE.

Belongs to the ankyrin SOCS box (ASB) family. As to quaternary structure, interacts with TBK1; this interaction promotes TBK1 proteasomal degradation. In terms of processing, phosphorylated by TBK1.

The protein resides in the cytoplasm. The protein operates within protein modification; protein ubiquitination. May be a substrate-recognition component of a SCF-like ECS (Elongin-Cullin-SOCS-box protein) E3 ubiquitin-protein ligase complex which mediates the ubiquitination and subsequent proteasomal degradation of target proteins. Inhibits IFN-beta production through the IRF3 signaling pathway by targeting TBK1 via 'Lys-48'-linked ubiquitination, leading to its proteasomal degradation. The protein is Ankyrin repeat and SOCS box protein 8 (ASB8) of Macaca fascicularis (Crab-eating macaque).